We begin with the raw amino-acid sequence, 278 residues long: ATP synthase subunit delta (278 aa).

It belongs to the ATPase delta chain family. As to quaternary structure, F-type ATPases have 2 components, F(1) - the catalytic core - and F(0) - the membrane proton channel. F(1) has five subunits: alpha(3), beta(3), gamma(1), delta(1), epsilon(1). F(0) has three main subunits: a(1), b(2) and c(10-14). The alpha and beta chains form an alternating ring which encloses part of the gamma chain. F(1) is attached to F(0) by a central stalk formed by the gamma and epsilon chains, while a peripheral stalk is formed by the delta and b chains.

The protein localises to the cell membrane. Its function is as follows. F(1)F(0) ATP synthase produces ATP from ADP in the presence of a proton or sodium gradient. F-type ATPases consist of two structural domains, F(1) containing the extramembraneous catalytic core and F(0) containing the membrane proton channel, linked together by a central stalk and a peripheral stalk. During catalysis, ATP synthesis in the catalytic domain of F(1) is coupled via a rotary mechanism of the central stalk subunits to proton translocation. Functionally, this protein is part of the stalk that links CF(0) to CF(1). It either transmits conformational changes from CF(0) to CF(1) or is implicated in proton conduction. The sequence is that of ATP synthase subunit delta from Bifidobacterium longum subsp. infantis (strain ATCC 15697 / DSM 20088 / JCM 1222 / NCTC 11817 / S12).